The primary structure comprises 132 residues: Small ribosomal subunit protein uS11 (132 aa).

Residues 1 to 16 (MAAGMKGKRSRRRKER) are compositionally biased toward basic residues. The disordered stretch occupies residues 1 to 20 (MAAGMKGKRSRRRKERKNVE).

Belongs to the universal ribosomal protein uS11 family. As to quaternary structure, part of the 30S ribosomal subunit. Interacts with proteins S7 and S18. Binds to IF-3.

Located on the platform of the 30S subunit, it bridges several disparate RNA helices of the 16S rRNA. Forms part of the Shine-Dalgarno cleft in the 70S ribosome. The polypeptide is Small ribosomal subunit protein uS11 (Clostridium botulinum (strain Kyoto / Type A2)).